Reading from the N-terminus, the 421-residue chain is NADH-quinone oxidoreductase subunit F 2 (421 aa).

Residue 53–62 (GRGGAGFPTG) coordinates NAD(+). 165–212 (GAGAYICGEETAMLESLEGKRAQPRLKPPFPAVAGLYASPTVINNVET) contributes to the FMN binding site. C342, C345, C348, and C388 together coordinate [4Fe-4S] cluster.

This sequence belongs to the complex I 51 kDa subunit family. It depends on FMN as a cofactor. Requires [4Fe-4S] cluster as cofactor.

The catalysed reaction is a quinone + NADH + 5 H(+)(in) = a quinol + NAD(+) + 4 H(+)(out). NDH-1 shuttles electrons from NADH, via FMN and iron-sulfur (Fe-S) centers, to quinones in the respiratory chain. The immediate electron acceptor for the enzyme in this species is believed to be ubiquinone. Couples the redox reaction to proton translocation (for every two electrons transferred, four hydrogen ions are translocated across the cytoplasmic membrane), and thus conserves the redox energy in a proton gradient. This Rhizobium meliloti (strain 1021) (Ensifer meliloti) protein is NADH-quinone oxidoreductase subunit F 2 (nuoF2).